We begin with the raw amino-acid sequence, 506 residues long: Carboxyl-terminal PDZ ligand of neuronal nitric oxide synthase protein (506 aa).

Residues 26–196 (FQHGICFEAK…ESERNSNSSG (171 aa)) enclose the PID domain. 2 disordered regions span residues 175–224 (HTQQ…VEVP) and 241–260 (DAVGKEGGSHTGSKVSHPQE). Phosphoserine is present on residues serine 188, serine 192, and serine 195. The span at 203-213 (TGAERASTATA) shows a compositional bias: low complexity. Serine 266 carries the post-translational modification Phosphoserine. Residues 322–363 (AAEAAARLEAQARVHQLLLQNKDMLQHISLLVKQVQELELKL) are a coiled coil. Residues serine 371, serine 374, serine 401, and serine 417 each carry the phosphoserine modification. The segment at 494–506 (QELGDGLDDEIAV) is interaction with NOS1. The short motif at 504 to 506 (IAV) is the PDZ-binding element.

In terms of assembly, interacts with the PDZ domain of NOS1 or the second PDZ domain of DLG4 through its C-terminus. Interacts with RASD1 and SYN1, SYN2 and SYN3 via its PID domain. Forms a ternary complex with NOS1 and RASD1. Forms a ternary complex with NOS1 and SYN1. In terms of tissue distribution, expressed in kidney glomeruli podocytes.

It localises to the cell projection. Its subcellular location is the filopodium. The protein resides in the podosome. Functionally, adapter protein involved in neuronal nitric-oxide (NO) synthesis regulation via its association with nNOS/NOS1. The complex formed with NOS1 and synapsins is necessary for specific NO and synapsin functions at a presynaptic level. Mediates an indirect interaction between NOS1 and RASD1 leading to enhance the ability of NOS1 to activate RASD1. Competes with DLG4 for interaction with NOS1, possibly affecting NOS1 activity by regulating the interaction between NOS1 and DLG4. In kidney podocytes, plays a role in podosomes and filopodia formation through CDC42 activation. This is Carboxyl-terminal PDZ ligand of neuronal nitric oxide synthase protein from Homo sapiens (Human).